The following is a 388-amino-acid chain: tRNA (guanine(26)-N(2))-dimethyltransferase (388 aa).

Residues 4–383 (RTIVEGTTKI…APIAEIKKII (380 aa)) enclose the Trm1 methyltransferase domain. S-adenosyl-L-methionine is bound by residues Arg-41, Arg-78, Asp-94, and Ala-123. Zn(2+) contacts are provided by Cys-251, Cys-254, Cys-271, and Cys-274.

It belongs to the class I-like SAM-binding methyltransferase superfamily. Trm1 family.

It catalyses the reaction guanosine(26) in tRNA + 2 S-adenosyl-L-methionine = N(2)-dimethylguanosine(26) in tRNA + 2 S-adenosyl-L-homocysteine + 2 H(+). Dimethylates a single guanine residue at position 26 of a number of tRNAs using S-adenosyl-L-methionine as donor of the methyl groups. This Methanosarcina mazei (strain ATCC BAA-159 / DSM 3647 / Goe1 / Go1 / JCM 11833 / OCM 88) (Methanosarcina frisia) protein is tRNA (guanine(26)-N(2))-dimethyltransferase.